The chain runs to 172 residues: Disulfide bond formation protein B (172 aa).

Residues 1-11 (MNPFRWSFRAQ) are Cytoplasmic-facing. The chain crosses the membrane as a helical span at residues 12–28 (FLLGFLACAGLLAYAIY). The Periplasmic portion of the chain corresponds to 29–46 (VQLHLGLEPCPLCIFQRI). An intrachain disulfide couples C38 to C41. Residues 47–63 (AFAALAVFFLLGALHGP) traverse the membrane as a helical segment. The Cytoplasmic portion of the chain corresponds to 64–70 (RAAAGRK). Residues 71–88 (VYGVLSFIAAGVGMGIAA) traverse the membrane as a helical segment. The Periplasmic segment spans residues 89–145 (RHVWVQIRPKDMMSSCGPPLSFLSETMGPFEVFRTVLTGTGDCGNIDWRFLGLSMPM). C104 and C131 are disulfide-bonded. A helical transmembrane segment spans residues 146–164 (WSMVWFVGLALWALYAGFK). Topologically, residues 165-172 (VRRSSVHH) are cytoplasmic.

The protein belongs to the DsbB family.

The protein localises to the cell inner membrane. Its function is as follows. Required for disulfide bond formation in some periplasmic proteins. Acts by oxidizing the DsbA protein. The sequence is that of Disulfide bond formation protein B from Xanthomonas axonopodis pv. citri (strain 306).